A 35-amino-acid chain; its full sequence is Photosystem II reaction center protein M (35 aa).

Residues 7–27 (GFIASILFVLVPTVFLLILFI) traverse the membrane as a helical segment.

This sequence belongs to the PsbM family. As to quaternary structure, PSII is composed of 1 copy each of membrane proteins PsbA, PsbB, PsbC, PsbD, PsbE, PsbF, PsbH, PsbI, PsbJ, PsbK, PsbL, PsbM, PsbT, PsbX, PsbY, PsbZ, Psb30/Ycf12, peripheral proteins PsbO, CyanoQ (PsbQ), PsbU, PsbV and a large number of cofactors. It forms dimeric complexes.

It is found in the cellular thylakoid membrane. One of the components of the core complex of photosystem II (PSII). PSII is a light-driven water:plastoquinone oxidoreductase that uses light energy to abstract electrons from H(2)O, generating O(2) and a proton gradient subsequently used for ATP formation. It consists of a core antenna complex that captures photons, and an electron transfer chain that converts photonic excitation into a charge separation. This subunit is found at the monomer-monomer interface. The protein is Photosystem II reaction center protein M of Microcystis aeruginosa (strain NIES-843 / IAM M-2473).